The chain runs to 37 residues: Large ribosomal subunit protein bL36c (37 aa).

It belongs to the bacterial ribosomal protein bL36 family.

It localises to the plastid. The protein resides in the chloroplast. This is Large ribosomal subunit protein bL36c from Tupiella akineta (Green alga).